Here is a 273-residue protein sequence, read N- to C-terminus: Dermonecrotic toxin LdSicTox-alphaIB1avi (273 aa).

H5 is a catalytic residue. E25 and D27 together coordinate Mg(2+). The Nucleophile role is filled by H41. 2 disulfides stabilise this stretch: C45/C51 and C47/C190. D85 contacts Mg(2+). A glycan (N-linked (GlcNAc...) asparagine) is linked at N250.

Belongs to the arthropod phospholipase D family. Class II subfamily. Mg(2+) serves as cofactor. In terms of tissue distribution, expressed by the venom gland.

The protein localises to the secreted. It carries out the reaction an N-(acyl)-sphingosylphosphocholine = an N-(acyl)-sphingosyl-1,3-cyclic phosphate + choline. It catalyses the reaction an N-(acyl)-sphingosylphosphoethanolamine = an N-(acyl)-sphingosyl-1,3-cyclic phosphate + ethanolamine. The catalysed reaction is a 1-acyl-sn-glycero-3-phosphocholine = a 1-acyl-sn-glycero-2,3-cyclic phosphate + choline. The enzyme catalyses a 1-acyl-sn-glycero-3-phosphoethanolamine = a 1-acyl-sn-glycero-2,3-cyclic phosphate + ethanolamine. Functionally, dermonecrotic toxins cleave the phosphodiester linkage between the phosphate and headgroup of certain phospholipids (sphingolipid and lysolipid substrates), forming an alcohol (often choline) and a cyclic phosphate. This toxin acts on sphingomyelin (SM). It may also act on ceramide phosphoethanolamine (CPE), lysophosphatidylcholine (LPC) and lysophosphatidylethanolamine (LPE), but not on lysophosphatidylserine (LPS), and lysophosphatidylglycerol (LPG). It acts by transphosphatidylation, releasing exclusively cyclic phosphate products as second products. Induces dermonecrosis, hemolysis, increased vascular permeability, edema, inflammatory response, and platelet aggregation. This chain is Dermonecrotic toxin LdSicTox-alphaIB1avi, found in Loxosceles deserta (Desert recluse spider).